The primary structure comprises 431 residues: 4-hydroxy-3-methylbut-2-en-1-yl diphosphate synthase (flavodoxin) (431 aa).

The tract at residues 1-21 (MNKLENPSQRDVAGPSPRHKT) is disordered. 4 residues coordinate [4Fe-4S] cluster: Cys-310, Cys-313, Cys-356, and Glu-363.

It belongs to the IspG family. [4Fe-4S] cluster is required as a cofactor.

The catalysed reaction is (2E)-4-hydroxy-3-methylbut-2-enyl diphosphate + oxidized [flavodoxin] + H2O + 2 H(+) = 2-C-methyl-D-erythritol 2,4-cyclic diphosphate + reduced [flavodoxin]. Its pathway is isoprenoid biosynthesis; isopentenyl diphosphate biosynthesis via DXP pathway; isopentenyl diphosphate from 1-deoxy-D-xylulose 5-phosphate: step 5/6. Converts 2C-methyl-D-erythritol 2,4-cyclodiphosphate (ME-2,4cPP) into 1-hydroxy-2-methyl-2-(E)-butenyl 4-diphosphate. The sequence is that of 4-hydroxy-3-methylbut-2-en-1-yl diphosphate synthase (flavodoxin) from Nitrobacter hamburgensis (strain DSM 10229 / NCIMB 13809 / X14).